The sequence spans 832 residues: SID1 transmembrane family member 2 (832 aa).

The first 15 residues, 1 to 15 (MIAWRLPLCVLLVAA), serve as a signal peptide directing secretion. Residues 16–293 (VESHLGALGP…VSQAVTSEAY (278 aa)) are Extracellular-facing. N27, N54, N60, N123, N141, and N165 each carry an N-linked (GlcNAc...) asparagine glycan. A helical transmembrane segment spans residues 294-314 (VGGMLFCLGIFLSFYLLTVLL). Residues 315 to 447 (ACWENWRQRK…DKRVLRKKYQ (133 aa)) are Cytoplasmic-facing. Residues S401, S403, and S404 each carry the phosphoserine modification. A helical transmembrane segment spans residues 448-468 (IYFWNIATIAVFYALPVVQLV). Topologically, residues 469–499 (ITYQTVVNVTGNQDICYYNFLCAHPLGNLSA) are extracellular. N476 and N496 each carry an N-linked (GlcNAc...) asparagine glycan. The helical transmembrane segment at 500 to 520 (FNNILSNLGYILLGLLFLLII) threads the bilayer. The Cytoplasmic segment spans residues 521–546 (LQREINHNRALLRNDLYALECGIPKH). The helical transmembrane segment at 547-567 (FGLFYAMGTALMMEGLLSACY) threads the bilayer. The Extracellular segment spans residues 568 to 605 (HVCPNYTNFQFDTSFMYMIAGLCMLKLYQKRHPDINAS). N-linked (GlcNAc...) asparagine glycans are attached at residues N572 and N603. The helical transmembrane segment at 606–626 (AYSAYACLAIVIFFSVLGVVF) threads the bilayer. Residues 627–631 (GKGNT) lie on the Cytoplasmic side of the membrane. Residues 632–652 (AFWIVFSVIHIISTLLLSTQL) form a helical membrane-spanning segment. Residues 653 to 688 (YYMGRWKLDSGIFRRILHVLYTDCIRQCSGPLYTDR) lie on the Extracellular side of the membrane. A helical transmembrane segment spans residues 689–709 (MVLLVMGNIINWSLAAYGLIM). Over 710 to 715 (RPNDFA) the chain is Cytoplasmic. The helical transmembrane segment at 716-736 (SYLLAIGICNLLLYFAFYIIM) threads the bilayer. Residues 737 to 746 (KLRSGERIKL) are Extracellular-facing. Residues 747-767 (IPLLCIVCTSVVWGFALFFFF) form a helical membrane-spanning segment. At 768-796 (QGLSTWQKTPAESREHNRDCILLDFFDDH) the chain is on the cytoplasmic side. The helical transmembrane segment at 797 to 817 (DIWHFLSSIAMFGSFLVLLTL) threads the bilayer. Over 818 to 832 (DDDLDTVQRDKIYVF) the chain is Extracellular.

This sequence belongs to the SID1 family. As to quaternary structure, interacts with adapter protein complex 1 (AP-1) and AP-2, but not AP-3 and AP-4. Interacts with LAMP2. Post-translationally, glycosylated. As to expression, highly expressed in the liver, brain, kidney and intestine (at protein level).

The protein localises to the lysosome membrane. The protein resides in the cell membrane. Mediates the translocation of RNA and DNA across the lysosomal membrane during RNA and DNA autophagy (RDA), a process in which RNA or DNA is directly imported into lysosomes in an ATP-dependent manner, and degraded. Involved in the uptake of single-stranded oligonucleotides by living cells, a process called gymnosis. In vitro, mediates the uptake of linear DNA more efficiently than that of circular DNA, but exhibits similar uptake efficacy toward RNA and DNA. Binds long double-stranded RNA (dsRNA) (500 - 700 base pairs), but not dsRNA shorter than 100 bp. This is SID1 transmembrane family member 2 (Sidt2) from Rattus norvegicus (Rat).